Reading from the N-terminus, the 478-residue chain is Islet cell autoantigen 1 (478 aa).

Residues 50–253 (ASDADLDAKL…TSHTMAAIHE (204 aa)) form the AH domain. Residues 306–317 (EHKDSSAYKTEE) are compositionally biased toward basic and acidic residues. Disordered stretches follow at residues 306-365 (EHKD…SGDK) and 398-422 (LKEP…GFLP).

In terms of tissue distribution, predominantly expressed in brain, pancreas and stomach mucosa. High expression also found in stomach muscle and testis.

The protein resides in the cytoplasm. It localises to the cytosol. It is found in the golgi apparatus membrane. The protein localises to the cytoplasmic vesicle. Its subcellular location is the secretory vesicle membrane. The protein resides in the secretory vesicle. It localises to the synaptic vesicle membrane. In terms of biological role, may play a role in neurotransmitter secretion. This is Islet cell autoantigen 1 from Mus musculus (Mouse).